The chain runs to 601 residues: DNA topoisomerase I, mitochondrial (601 aa).

Residues 1–50 (MRVVRLLRLRAALTLLGEVPRRPASRGVPGSRRTQKGSGARWEKEKHEDG) constitute a mitochondrion transit peptide. Residues 22–48 (RPASRGVPGSRRTQKGSGARWEKEKHE) are disordered. Interaction with DNA stretches follow at residues 261–262 (KY), 324–329 (RAGNEK), and 421–423 (TAK). One can recognise a Topo IB-type catalytic domain in the interval 268–601 (CSKLKGETAW…LAMAGEDFEF (334 aa)). Tyrosine 559 serves as the catalytic O-(3'-phospho-DNA)-tyrosine intermediate.

The protein belongs to the type IB topoisomerase family. It depends on Ca(2+) as a cofactor. Mg(2+) serves as cofactor.

Its subcellular location is the mitochondrion. The catalysed reaction is ATP-independent breakage of single-stranded DNA, followed by passage and rejoining.. In terms of biological role, releases the supercoiling and torsional tension of DNA introduced during duplication of mitochondrial DNA by transiently cleaving and rejoining one strand of the DNA duplex. Introduces a single-strand break via transesterification at a target site in duplex DNA. The scissile phosphodiester is attacked by the catalytic tyrosine of the enzyme, resulting in the formation of a DNA-(3'-phosphotyrosyl)-enzyme intermediate and the expulsion of a 5'-OH DNA strand. The free DNA strand then rotates around the intact phosphodiester bond on the opposing strand, thus removing DNA supercoils. Finally, in the religation step, the DNA 5'-OH attacks the covalent intermediate to expel the active-site tyrosine and restore the DNA phosphodiester backbone. This chain is DNA topoisomerase I, mitochondrial (TOP1MT), found in Pan troglodytes (Chimpanzee).